Reading from the N-terminus, the 422-residue chain is Mannose-1-phosphate guanylyltransferase regulatory subunit alpha-B (422 aa).

Residues 2 to 253 (LKAIILIGGP…QHFWSQIKSA (252 aa)) form a substrate-binding domain region. The GDP-alpha-D-mannose site is built by glutamate 85 and glutamine 249. The interval 275 to 422 (LATNQGGTPK…NRSFKNQIIL (148 aa)) is hexapeptide repeat domain. A C-loop region spans residues 358–386 (TPSDPNPNDPYAKIDSETLFRDGGLTPSI).

It belongs to the transferase hexapeptide repeat family. Component of the GMPPA-GMPPB mannose-1-phosphate guanylyltransferase complex composed of 4 GMPPA subunits and 8 GMPPB subunits; the complex is organized into three layers, a central layer made up of 2 GMPPA dimers sandwiched between two layers each made up of 2 GMPPB dimers.

It participates in nucleotide-sugar biosynthesis; GDP-alpha-D-mannose biosynthesis; GDP-alpha-D-mannose from alpha-D-mannose 1-phosphate (GTP route): step 1/1. Functionally, regulatory subunit of the GMPPA-GMPPB mannose-1-phosphate guanylyltransferase complex; reduces the catalytic activity of GMPPB when part of the complex. Mediates allosteric feedback inhibition of GMPPB catalytic activity upon binding GDP-alpha-D-mannose. Together with GMPPB regulates GDP-alpha-D-mannose levels. One of two paralogs (gmppaa and gmppab) that may have redundant functions. This chain is Mannose-1-phosphate guanylyltransferase regulatory subunit alpha-B (gmppab), found in Danio rerio (Zebrafish).